The following is a 673-amino-acid chain: DNA ligase (673 aa).

NAD(+)-binding positions include 33–37 (DYEYD), 82–83 (SL), and glutamate 113. Lysine 115 (N6-AMP-lysine intermediate) is an active-site residue. NAD(+) is bound by residues arginine 136, glutamate 170, lysine 285, and lysine 309. Zn(2+) contacts are provided by cysteine 403, cysteine 406, cysteine 421, and cysteine 426. Positions 583–672 (AKSDILKGYT…SREEAEKILM (90 aa)) constitute a BRCT domain.

This sequence belongs to the NAD-dependent DNA ligase family. LigA subfamily. Requires Mg(2+) as cofactor. Mn(2+) is required as a cofactor.

The catalysed reaction is NAD(+) + (deoxyribonucleotide)n-3'-hydroxyl + 5'-phospho-(deoxyribonucleotide)m = (deoxyribonucleotide)n+m + AMP + beta-nicotinamide D-nucleotide.. Its function is as follows. DNA ligase that catalyzes the formation of phosphodiester linkages between 5'-phosphoryl and 3'-hydroxyl groups in double-stranded DNA using NAD as a coenzyme and as the energy source for the reaction. It is essential for DNA replication and repair of damaged DNA. This Caldicellulosiruptor bescii (strain ATCC BAA-1888 / DSM 6725 / KCTC 15123 / Z-1320) (Anaerocellum thermophilum) protein is DNA ligase.